Here is a 238-residue protein sequence, read N- to C-terminus: Ribonuclease 3 (238 aa).

Residues 11–136 (RARLEAAIGY…LIAAIYLDGG (126 aa)) form the RNase III domain. Residue Glu-49 participates in Mg(2+) binding. Asp-53 is a catalytic residue. Mg(2+) is bound by residues Asp-122 and Glu-125. Glu-125 is an active-site residue. Positions 161–230 (DAKTELQEWA…AMKLLEREGV (70 aa)) constitute a DRBM domain. Residues 180 to 193 (YRTEDRSGPDHDPR) are compositionally biased toward basic and acidic residues. The segment at 180-215 (YRTEDRSGPDHDPRFTVTVEVDGIDPETGVDRSKRG) is disordered.

Belongs to the ribonuclease III family. As to quaternary structure, homodimer. Requires Mg(2+) as cofactor.

The protein localises to the cytoplasm. It carries out the reaction Endonucleolytic cleavage to 5'-phosphomonoester.. Functionally, digests double-stranded RNA. Involved in the processing of primary rRNA transcript to yield the immediate precursors to the large and small rRNAs (23S and 16S). Processes some mRNAs, and tRNAs when they are encoded in the rRNA operon. Processes pre-crRNA and tracrRNA of type II CRISPR loci if present in the organism. The protein is Ribonuclease 3 of Sinorhizobium medicae (strain WSM419) (Ensifer medicae).